The sequence spans 124 residues: Large ribosomal subunit protein uL22 (124 aa).

Belongs to the universal ribosomal protein uL22 family. Part of the 50S ribosomal subunit.

Functionally, this protein binds specifically to 23S rRNA; its binding is stimulated by other ribosomal proteins, e.g. L4, L17, and L20. It is important during the early stages of 50S assembly. It makes multiple contacts with different domains of the 23S rRNA in the assembled 50S subunit and ribosome. In terms of biological role, the globular domain of the protein is located near the polypeptide exit tunnel on the outside of the subunit, while an extended beta-hairpin is found that lines the wall of the exit tunnel in the center of the 70S ribosome. The polypeptide is Large ribosomal subunit protein uL22 (Macrococcus caseolyticus (strain JCSC5402) (Macrococcoides caseolyticum)).